The sequence spans 518 residues: Protein MGF 505-6R (518 aa).

ANK repeat units follow at residues 54-83, 129-158, 261-290, 292-322, and 324-351; these read SIND…NLHY, ECDF…LLNV, SVNR…IPRG, IERL…KVKN, and KKLV…NLVD.

The protein belongs to the asfivirus MGF 505 family.

Functionally, plays a role in virus cell tropism, and may be required for efficient virus replication in macrophages. In Ornithodoros (relapsing fever ticks), this protein is Protein MGF 505-6R.